A 422-amino-acid chain; its full sequence is Kynurenine--oxoglutarate transaminase 1 (422 aa).

Positions 36 and 185 each coordinate substrate. Residue K247 is modified to N6-(pyridoxal phosphate)lysine. Residue R398 participates in substrate binding.

The protein belongs to the class-I pyridoxal-phosphate-dependent aminotransferase family. As to quaternary structure, homodimer. The cofactor is pyridoxal 5'-phosphate.

Its subcellular location is the cytoplasm. The protein resides in the cytosol. The catalysed reaction is L-kynurenine + 2-oxoglutarate = kynurenate + L-glutamate + H2O. The enzyme catalyses 3-phenylpyruvate + L-glutamine = 2-oxoglutaramate + L-phenylalanine. It carries out the reaction an S-substituted L-cysteine + H2O = a thiol + pyruvate + NH4(+). It participates in amino-acid degradation; L-kynurenine degradation; kynurenate from L-kynurenine: step 1/2. With respect to regulation, inhibited by tryptophan, indole-3-pyruvic acid, 3-indolepropionic acid, DL-indole-3-lactic acid, indole-3-acetic acid (IAC), amino-oxyacetate (AOAA), aminooxy-phenylpropionic acid (AOPP) and Tris. Catalyzes the irreversible transamination of the L-tryptophan metabolite L-kynurenine to form kynurenic acid (KA), an intermediate in the tryptophan catabolic pathway which is also a broad spectrum antagonist of the three ionotropic excitatory amino acid receptors among others. Also metabolizes the cysteine conjugates of certain halogenated alkenes and alkanes to form reactive metabolites. Catalyzes the beta-elimination of S-conjugates and Se-conjugates of L-(seleno)cysteine, resulting in the cleavage of the C-S or C-Se bond. The sequence is that of Kynurenine--oxoglutarate transaminase 1 from Homo sapiens (Human).